Here is a 284-residue protein sequence, read N- to C-terminus: Shikimate dehydrogenase (NADP(+)) (284 aa).

Shikimate-binding positions include 20 to 22 (SIS) and Ser67. Lys71 functions as the Proton acceptor in the catalytic mechanism. Position 83 (Asp83) interacts with NADP(+). Positions 92 and 107 each coordinate shikimate. Residues 129–133 (GAGGA) and Ile227 contribute to the NADP(+) site. Tyr229 is a binding site for shikimate. Gly250 is a binding site for NADP(+).

It belongs to the shikimate dehydrogenase family. Homodimer.

It carries out the reaction shikimate + NADP(+) = 3-dehydroshikimate + NADPH + H(+). The protein operates within metabolic intermediate biosynthesis; chorismate biosynthesis; chorismate from D-erythrose 4-phosphate and phosphoenolpyruvate: step 4/7. Its function is as follows. Involved in the biosynthesis of the chorismate, which leads to the biosynthesis of aromatic amino acids. Catalyzes the reversible NADPH linked reduction of 3-dehydroshikimate (DHSA) to yield shikimate (SA). This Streptococcus pneumoniae (strain ATCC 700669 / Spain 23F-1) protein is Shikimate dehydrogenase (NADP(+)).